The chain runs to 181 residues: Adenine phosphoribosyltransferase 2 (181 aa).

Position 2 is an N-acetylserine (serine 2).

Belongs to the purine/pyrimidine phosphoribosyltransferase family.

The protein localises to the cytoplasm. It carries out the reaction AMP + diphosphate = 5-phospho-alpha-D-ribose 1-diphosphate + adenine. It participates in purine metabolism; AMP biosynthesis via salvage pathway; AMP from adenine: step 1/1. Its function is as follows. Catalyzes a salvage reaction resulting in the formation of AMP, that is energically less costly than de novo synthesis. May lack catalytic activity. The chain is Adenine phosphoribosyltransferase 2 (APT2) from Saccharomyces cerevisiae (strain ATCC 204508 / S288c) (Baker's yeast).